Reading from the N-terminus, the 143-residue chain is Trypsin inhibitor CMc (143 aa).

Residues 1–24 (MASCSQHLLSAVAIFSVLAGVATA) form the signal peptide.

The protein belongs to the protease inhibitor I6 (cereal trypsin/alpha-amylase inhibitor) family. Endosperm.

Its subcellular location is the secreted. Its function is as follows. Trypsin inhibitor. No alpha-amylase inhibition detected. This is Trypsin inhibitor CMc (ITR2) from Hordeum vulgare (Barley).